The chain runs to 727 residues: Pre-B-cell leukemia transcription factor-interacting protein 1 (727 aa).

Over residues 1-10 (MASCPDSDNS) the composition is skewed to polar residues. Residues 1–169 (MASCPDSDNS…GREPSSSQPV (169 aa)) form a disordered region. A phosphoserine mark is found at Ser-131, Ser-142, Ser-143, and Ser-144. At Thr-148 the chain carries Phosphothreonine. Residue Ser-164 is modified to Phosphoserine. 2 coiled-coil regions span residues 270-350 (FLLD…RGVD) and 377-405 (DPSLLEQHKQLEAEAKALRQELQRQWQLL). The span at 446 to 456 (QGINTGRSPND) shows a compositional bias: polar residues. Disordered stretches follow at residues 446-565 (QGIN…NSPD) and 694-727 (LKKRSRKKEKHSWNPRVVGPREEHSRHPHHYHQG). The segment covering 473 to 563 (WGGKEKWRGG…QKHSWGKDNS (91 aa)) has biased composition (basic and acidic residues). The Nuclear localization signal motif lies at 486-506 (QKAEHWKPRKEESGQERQRSW). Phosphoserine is present on Ser-563. The Nuclear localization signal signature appears at 691-716 (DKALKKRSRKKEKHSWNPRVVGPREE). Residues 694–703 (LKKRSRKKEK) show a composition bias toward basic residues.

Interacts with ESR1, PBX1, PBX2 and PBX3. Interacts with TEX11.

It is found in the cytoplasm. The protein localises to the cytoskeleton. Its subcellular location is the nucleus. In terms of biological role, regulator of pre-B-cell leukemia transcription factors (BPXs) function. Inhibits the binding of PBX1-HOX complex to DNA and blocks the transcriptional activity of E2A-PBX1. Tethers estrogen receptor-alpha (ESR1) to microtubules and allows them to influence estrogen receptors-alpha signaling. In Mus musculus (Mouse), this protein is Pre-B-cell leukemia transcription factor-interacting protein 1 (Pbxip1).